The primary structure comprises 150 residues: Viral late gene transcription factor 2 (150 aa).

Belongs to the chordopoxvirinae VLTF-2 family. Interacts with itself. Interacts with the late transcription factors VLTF-1.

Functionally, acts with RNA polymerase to initiate transcription from late gene promoters. In Homo sapiens (Human), this protein is Viral late gene transcription factor 2 (VLTF2).